A 443-amino-acid chain; its full sequence is Trigger factor (443 aa).

One can recognise a PPIase FKBP-type domain in the interval 165 to 250; it reads GDQVVMDFVG…IKEVKEPVAA (86 aa).

Belongs to the FKBP-type PPIase family. Tig subfamily.

It is found in the cytoplasm. The enzyme catalyses [protein]-peptidylproline (omega=180) = [protein]-peptidylproline (omega=0). Involved in protein export. Acts as a chaperone by maintaining the newly synthesized protein in an open conformation. Functions as a peptidyl-prolyl cis-trans isomerase. The protein is Trigger factor of Ruegeria pomeroyi (strain ATCC 700808 / DSM 15171 / DSS-3) (Silicibacter pomeroyi).